Here is a 484-residue protein sequence, read N- to C-terminus: Pyruvate kinase (484 aa).

R33 is a binding site for substrate. 4 residues coordinate K(+): N35, S37, D67, and T68. 35–38 (NFSH) provides a ligand contact to ATP. Residues R74 and K155 each contribute to the ATP site. E221 is a Mg(2+) binding site. 3 residues coordinate substrate: G244, D245, and T277. Position 245 (D245) interacts with Mg(2+).

This sequence belongs to the pyruvate kinase family. In terms of assembly, homotetramer. It depends on Mg(2+) as a cofactor. K(+) serves as cofactor.

It catalyses the reaction pyruvate + ATP = phosphoenolpyruvate + ADP + H(+). It participates in carbohydrate degradation; glycolysis; pyruvate from D-glyceraldehyde 3-phosphate: step 5/5. This is Pyruvate kinase (pyk) from Chlamydia pneumoniae (Chlamydophila pneumoniae).